We begin with the raw amino-acid sequence, 236 residues long: Endo-1,4-beta-xylanase 3 (236 aa).

The signal sequence occupies residues 1–45; the sequence is MQILTWALAALAAIPAVTAAPVETVEASSMDELVERSPNVTLVAR. N-linked (GlcNAc...) asparagine glycosylation is found at Asn39 and Asn106. The GH11 domain maps to 46-236; it reads GTPSSTGTHN…SSGSASMTVR (191 aa). Glu131 serves as the catalytic Nucleophile. The Proton donor role is filled by Glu223.

It belongs to the glycosyl hydrolase 11 (cellulase G) family.

Its subcellular location is the secreted. It carries out the reaction Endohydrolysis of (1-&gt;4)-beta-D-xylosidic linkages in xylans.. The protein operates within glycan degradation; xylan degradation. Its function is as follows. Endo-1,4-beta-xylanase involved in the hydrolysis of xylan, a major structural heterogeneous polysaccharide found in plant biomass representing the second most abundant polysaccharide in the biosphere, after cellulose. The protein is Endo-1,4-beta-xylanase 3 (XYL3) of Pyricularia grisea (Crabgrass-specific blast fungus).